The sequence spans 449 residues: Nuclear hormone receptor family member nhr-43 (449 aa).

Residues N44–G122 constitute a DNA-binding region (nuclear receptor). NR C4-type zinc fingers lie at residues C47–C68 and C84–C105. The segment covering S125–D142 has biased composition (basic and acidic residues). Positions S125–C154 are disordered. An NR LBD domain is found at N200–I449.

Its subcellular location is the nucleus. Ligand-activated transcription factor. Positively modulates expression of homeobox protein lin-39, perhaps by binding to the sequence motif 5'-TGAC-3' in regulatory regions of the lin-39 gene, acting in the embryo, and also in the vulval lineage. The chain is Nuclear hormone receptor family member nhr-43 from Caenorhabditis elegans.